The primary structure comprises 192 residues: uncharacterized protein (192 aa).

A Nudix hydrolase domain is found at 29 to 160 (RRQAAVLIPV…PLDIYRRGDS (132 aa)). A Nudix box motif is present at residues 67–89 (GAVDSSDASLIAAALREAQEEVA). Residues Glu83 and Glu87 each coordinate Mg(2+).

This sequence belongs to the Nudix hydrolase family. PCD1 subfamily. Mn(2+) is required as a cofactor. The cofactor is Mg(2+).

Its function is as follows. Probably mediates the hydrolysis of some nucleoside diphosphate derivatives. This is an uncharacterized protein from Citrobacter koseri (strain ATCC BAA-895 / CDC 4225-83 / SGSC4696).